A 461-amino-acid polypeptide reads, in one-letter code: Methylenetetrahydrofolate--tRNA-(uracil-5-)-methyltransferase TrmFO (461 aa).

16-21 serves as a coordination point for FAD; it reads GAGLAG.

The protein belongs to the MnmG family. TrmFO subfamily. It depends on FAD as a cofactor.

It is found in the cytoplasm. It carries out the reaction uridine(54) in tRNA + (6R)-5,10-methylene-5,6,7,8-tetrahydrofolate + NADH + H(+) = 5-methyluridine(54) in tRNA + (6S)-5,6,7,8-tetrahydrofolate + NAD(+). It catalyses the reaction uridine(54) in tRNA + (6R)-5,10-methylene-5,6,7,8-tetrahydrofolate + NADPH + H(+) = 5-methyluridine(54) in tRNA + (6S)-5,6,7,8-tetrahydrofolate + NADP(+). In terms of biological role, catalyzes the folate-dependent formation of 5-methyl-uridine at position 54 (M-5-U54) in all tRNAs. The protein is Methylenetetrahydrofolate--tRNA-(uracil-5-)-methyltransferase TrmFO of Parasynechococcus marenigrum (strain WH8102).